The primary structure comprises 136 residues: Type II nicking enzyme V.XorIIP (136 aa).

Belongs to the Vsr family.

Functionally, may nick XorII sequences that contain T/G mispairs resulting from m5C-deamination. If unrepaired, these mismatches can lead to C-to-T transition mutations. The very short patch (VSP) repair process counteracts the mutagenic process by repairing the mismatches in favor of the G-containing strand. This enzyme is an endonuclease that nicks double-stranded DNA within the sequence CGATCG (C-methylation site unknown) next to the thymidine residue that is mismatched to 2'-deoxyguanosine. The incision is mismatch-dependent and strand-specific. This is Type II nicking enzyme V.XorIIP from Xanthomonas oryzae pv. oryzae (strain KACC10331 / KXO85).